We begin with the raw amino-acid sequence, 1534 residues long: ABC transporter G family member 6 (1534 aa).

The segment covering 1–11 (MAKQDPKDKNS) has biased composition (basic and acidic residues). Residues 1–85 (MAKQDPKDKN…ESNYDSDDEK (85 aa)) form a disordered region. Residues 21-65 (NNNNNENLDNDQELLNNNNNNNNNNNNNNNNNNNNNNNNNNNNNL) are compositionally biased toward low complexity. An ABC transporter 1 domain is found at 138–385 (VYCRNATYTV…FKKLGFACPS (248 aa)). Position 177-184 (177-184 (GTPGCGKS)) interacts with ATP. The ABC transmembrane type-2 1 domain occupies 481–757 (RRNYYNFLTR…VVCFFALKYF (277 aa)). The next 7 membrane-spanning stretches (helical) occupy residues 486–506 (NFLT…TLYW), 521–541 (LLFF…NSFF), 566–586 (IICD…IVYW), 592–612 (PVFI…NLSL), 625–645 (IEIA…FSGF), 652–672 (IGGW…FQGL), and 734–754 (VVFG…FFAL). Residues 781–907 (KQDEESAAIS…KSKNGKDIGS (127 aa)) are disordered. The segment covering 797–808 (IDDDNDDDADYE) has biased composition (acidic residues). The segment covering 830–841 (SPSSLTTGSPYY) has biased composition (polar residues). A compositionally biased stretch (low complexity) spans 842-856 (NINNNNNNLSGSGNN). The segment covering 864–873 (TPSNLSPSVN) has biased composition (polar residues). Low complexity predominate over residues 874–896 (SPITINSPMPTSPSNNNNNNNSN). Basic and acidic residues predominate over residues 897 to 906 (EKSKNGKDIG). The region spanning 924 to 1166 (VKVDDPDNPK…VILDYCDKLG (243 aa)) is the ABC transporter 2 domain. 960-967 (GPSGAGKS) contacts ATP. The region spanning 1256–1529 (LRRPAIFVSN…GLSFWGFKKI (274 aa)) is the ABC transmembrane type-2 2 domain. Transmembrane regions (helical) follow at residues 1261 to 1281 (IFVS…TLFV), 1296 to 1316 (LLFF…PTTV), 1345 to 1365 (YPFT…IAGL), 1377 to 1397 (CLFI…CLAV), 1404 to 1424 (MAST…GFVI), and 1506 to 1526 (IDIA…FWGF).

The protein belongs to the ABC transporter superfamily. ABCG family. PDR (TC 3.A.1.205) subfamily.

Its subcellular location is the membrane. This chain is ABC transporter G family member 6 (abcG6), found in Dictyostelium discoideum (Social amoeba).